Consider the following 413-residue polypeptide: MQVYLVGGAVRDHLLGHPYHEKDYVVVGASPQQLLDQGFSPVGKDFPVFLHPKTKEEYALARTERKSGIGYHGFNFFTDPDVSLEDDLIRRDLTINAMAMDQDGNVYDPYGGQKDLEQRILRHVSDAFIEDPLRVLRVARFAARYARYGFKIADETLLLMQSITQTGELESLTAERVWKETSRALMEDQADIYFDVLRQCHALKVLFPEIDALFGVPQRPEYHPEIDCGIHTLMSLRQACKSNYSLDVRYAVLVHDLGKALTPKDILPRHIMHEERGLIPVEELSNRLKIPTQMKQLALAVCKEHLKCHQAMSLKPGTLWRLLQRLDVLRRPERVEAFINACECDARGRLGLENRDYPQAAFMFKAMQVVRSIKAQDLPAYIQGSEIGEKLIQYRIDALAELKKQYDDSLATE.

ATP contacts are provided by Gly8 and Arg11. Residues Gly8 and Arg11 each coordinate CTP. Residues Glu21 and Asp23 each contribute to the Mg(2+) site. Residues Arg91, Arg137, and Arg140 each coordinate ATP. Positions 91, 137, and 140 each coordinate CTP. The 102-residue stretch at 228 to 329 (CGIHTLMSLR…WRLLQRLDVL (102 aa)) folds into the HD domain.

It belongs to the tRNA nucleotidyltransferase/poly(A) polymerase family. Bacterial CCA-adding enzyme type 1 subfamily. Monomer. Can also form homodimers and oligomers. The cofactor is Mg(2+). Ni(2+) serves as cofactor.

The enzyme catalyses a tRNA precursor + 2 CTP + ATP = a tRNA with a 3' CCA end + 3 diphosphate. It carries out the reaction a tRNA with a 3' CCA end + 2 CTP + ATP = a tRNA with a 3' CCACCA end + 3 diphosphate. Catalyzes the addition and repair of the essential 3'-terminal CCA sequence in tRNAs without using a nucleic acid template. Adds these three nucleotides in the order of C, C, and A to the tRNA nucleotide-73, using CTP and ATP as substrates and producing inorganic pyrophosphate. tRNA 3'-terminal CCA addition is required both for tRNA processing and repair. Also involved in tRNA surveillance by mediating tandem CCA addition to generate a CCACCA at the 3' terminus of unstable tRNAs. While stable tRNAs receive only 3'-terminal CCA, unstable tRNAs are marked with CCACCA and rapidly degraded. This Acinetobacter baylyi (strain ATCC 33305 / BD413 / ADP1) protein is Multifunctional CCA protein.